We begin with the raw amino-acid sequence, 64 residues long: Phylloxin-B1 (64 aa).

The first 22 residues, 1–22 (MVFLKKSLLLVLFVGLVSLSIC), serve as a signal peptide directing secretion. A propeptide spanning residues 23–42 (EENKREEHEEIEENKEKAEE) is cleaved from the precursor. Q63 is subject to Glutamine amide.

In terms of tissue distribution, expressed by the skin glands.

The protein resides in the secreted. Functionally, antimicrobial peptide against the wall-less bacteria A.laidlawii and S.melliferum, the Gram-positive bacteria B.megaterium KM, C.glutamicum ATCC 27853 and M.luteus ATCC 27853 and the Gram-negative-bacteria R.meliloti 102F34 and E.coli K12. The protein is Phylloxin-B1 of Phyllomedusa bicolor (Two-colored leaf frog).